Consider the following 202-residue polypeptide: Peroxynitrite isomerase (202 aa).

The short motif at 21–27 is the GXWXGXG element; it reads GEWEGRG. Residue His-193 coordinates heme b.

The protein belongs to the nitrobindin family. Homodimer. Requires heme b as cofactor.

It catalyses the reaction peroxynitrite = nitrate. The protein operates within nitrogen metabolism. In terms of biological role, heme-binding protein able to scavenge peroxynitrite and to protect free L-tyrosine against peroxynitrite-mediated nitration, by acting as a peroxynitrite isomerase that converts peroxynitrite to nitrate. Therefore, this protein likely plays a role in peroxynitrite sensing and in the detoxification of reactive nitrogen and oxygen species (RNS and ROS, respectively). Is able to bind nitric oxide (NO) in vitro, but may act as a sensor of peroxynitrite levels in vivo. The sequence is that of Peroxynitrite isomerase from Pseudarthrobacter chlorophenolicus (strain ATCC 700700 / DSM 12829 / CIP 107037 / JCM 12360 / KCTC 9906 / NCIMB 13794 / A6) (Arthrobacter chlorophenolicus).